We begin with the raw amino-acid sequence, 594 residues long: Keratin, type II cytoskeletal 2 oral (594 aa).

The head stretch occupies residues 1-164 (MSRQACKKSF…DPQIGQVKAQ (164 aa)). An omega-N-methylarginine mark is found at arginine 85 and arginine 104. The tract at residues 165–200 (EREQIKTLNNKFASFIDKVRFLEQQNKVLETKWELL) is coil 1A. The IF rod domain occupies 165-480 (EREQIKTLNN…KLLEGEECRL (316 aa)). A linker 1 region spans residues 201–221 (QQQTIRSGSGPQNLEPFFESY). A coil 1B region spans residues 222–313 (ISCLRKQLDS…TLYDMELSQI (92 aa)). The tract at residues 314–337 (QSHVSDTSVVLSMDNNRCLDLDSI) is linker 12. Positions 338-476 (IAEVKAQYED…ATYRKLLEGE (139 aa)) are coil 2. Positions 477–594 (ECRLSGEFQN…TTSSSQQRSK (118 aa)) are tail. The disordered stretch occupies residues 497–594 (TSTSSSGSFR…TTSSSQQRSK (98 aa)). Residues 506–522 (RGTGGSNYGGDSSGRSG) are compositionally biased toward gly residues. Over residues 523–551 (GSSSSSSRGSSSRGSSGSRLGSGGSISVS) the composition is skewed to low complexity. The residue at position 541 (arginine 541) is an Omega-N-methylarginine. Polar residues predominate over residues 552-564 (QQRMGFNSGGSQT). A compositionally biased stretch (low complexity) spans 565–594 (SVGSSYKSGRGGSSSVQFSQTTSSSQQRSK).

The protein belongs to the intermediate filament family. Heterotetramer of two type I and two type II keratins.

Its function is as follows. Probably contributes to terminal cornification. The polypeptide is Keratin, type II cytoskeletal 2 oral (Mus musculus (Mouse)).